Reading from the N-terminus, the 378-residue chain is uncharacterized protein (378 aa).

The protein belongs to the mimivirus L17x/L18x family.

This is an uncharacterized protein from Acanthamoeba polyphaga (Amoeba).